The primary structure comprises 352 residues: UDP-N-acetylglucosamine--N-acetylmuramyl-(pentapeptide) pyrophosphoryl-undecaprenol N-acetylglucosamine transferase 2 (352 aa).

UDP-N-acetyl-alpha-D-glucosamine contacts are provided by residues 11-13, R164, S194, and Q289; that span reads SAG.

It belongs to the glycosyltransferase 28 family. MurG subfamily.

The protein localises to the cell membrane. It carries out the reaction di-trans,octa-cis-undecaprenyl diphospho-N-acetyl-alpha-D-muramoyl-L-alanyl-D-glutamyl-meso-2,6-diaminopimeloyl-D-alanyl-D-alanine + UDP-N-acetyl-alpha-D-glucosamine = di-trans,octa-cis-undecaprenyl diphospho-[N-acetyl-alpha-D-glucosaminyl-(1-&gt;4)]-N-acetyl-alpha-D-muramoyl-L-alanyl-D-glutamyl-meso-2,6-diaminopimeloyl-D-alanyl-D-alanine + UDP + H(+). The protein operates within cell wall biogenesis; peptidoglycan biosynthesis. Functionally, cell wall formation. Catalyzes the transfer of a GlcNAc subunit on undecaprenyl-pyrophosphoryl-MurNAc-pentapeptide (lipid intermediate I) to form undecaprenyl-pyrophosphoryl-MurNAc-(pentapeptide)GlcNAc (lipid intermediate II). In Bacillus cereus (strain ATCC 14579 / DSM 31 / CCUG 7414 / JCM 2152 / NBRC 15305 / NCIMB 9373 / NCTC 2599 / NRRL B-3711), this protein is UDP-N-acetylglucosamine--N-acetylmuramyl-(pentapeptide) pyrophosphoryl-undecaprenol N-acetylglucosamine transferase 2.